We begin with the raw amino-acid sequence, 311 residues long: tRNA-cytidine(32) 2-sulfurtransferase (311 aa).

The short motif at 47–52 (SGGKDS) is the PP-loop motif element. [4Fe-4S] cluster is bound by residues C122, C125, and C213.

Belongs to the TtcA family. In terms of assembly, homodimer. Mg(2+) is required as a cofactor. It depends on [4Fe-4S] cluster as a cofactor.

It localises to the cytoplasm. It catalyses the reaction cytidine(32) in tRNA + S-sulfanyl-L-cysteinyl-[cysteine desulfurase] + AH2 + ATP = 2-thiocytidine(32) in tRNA + L-cysteinyl-[cysteine desulfurase] + A + AMP + diphosphate + H(+). The protein operates within tRNA modification. Catalyzes the ATP-dependent 2-thiolation of cytidine in position 32 of tRNA, to form 2-thiocytidine (s(2)C32). The sulfur atoms are provided by the cysteine/cysteine desulfurase (IscS) system. The polypeptide is tRNA-cytidine(32) 2-sulfurtransferase (Escherichia coli O81 (strain ED1a)).